Consider the following 205-residue polypeptide: Phosphoribosyl-dephospho-CoA transferase (205 aa).

Active-site residues include aspartate 134 and aspartate 136.

Belongs to the MdcG family.

It catalyses the reaction apo-[malonate decarboxylase ACP] + 2'-(5''-triphospho-alpha-D-ribosyl)-3'-dephospho-CoA = holo-[malonate decarboxylase ACP] + diphosphate. Functionally, transfers 2'-(5-triphosphoribosyl)-3'-dephosphocoenzyme-A to the apo-[acyl-carrier-protein] of the malonate decarboxylase to yield holo-[acyl-carrier-protein]. This Klebsiella pneumoniae (strain 342) protein is Phosphoribosyl-dephospho-CoA transferase.